A 435-amino-acid chain; its full sequence is Evolutionarily conserved signaling intermediate in Toll pathway, mitochondrial (435 aa).

A mitochondrion-targeting transit peptide spans 1-48 (MSWVQVNLLVRSLSRGWGGLCRPALSGTPFAQVSLQALRGLHCSAATH). Lys-372 is covalently cross-linked (Glycyl lysine isopeptide (Lys-Gly) (interchain with G-Cter in ubiquitin)). Positions 401 to 435 (LTTSRLEGQSPPHSPPKGPEEDDETIQAEQQQGQS) are disordered.

This sequence belongs to the ECSIT family. In terms of assembly, interacts with MAP3K1, SMAD4 and TRAF6. Interacts with SMAD1 only after BMP4-treatment. Part of the mitochondrial complex I assembly/MCIA complex that comprises at least the core subunits TMEM126B, NDUFAF1, ECSIT and ACAD9 and complement subunits such as COA1 and TMEM186. Interacts with NDUFAF1. Interacts with ACAD9. Interacts with TRIM59. Interacts with TMEM70 and TMEM242. Interacts (when ubiquitinated) with NF-kappa-B subunits RELA and NFKB1. Interacts with RIGI, IFIT1 and MAVS; these interactions promote RLR-mediated type I IFN induction. Interacts with SQSTM1; this interaction inhibits TLR4 signaling via functional regulation of the TRAF6-ECSIT complex. Interacts with cereblon/CRBN; this interaction inhibits the ubiquitination of ECSIT. In terms of processing, ubiquitinated on Lys-372; leading to translocation in the nucleus together with RELA and NFKB1 and expression of NF-kappa-B-dependent genes. Detected in heart, brain, lung, liver, skeletal muscle, kidney and testis. Detected in embryonic mesoderm and epiblast, and in extraembryonic ectoderm.

Its subcellular location is the cytoplasm. It is found in the nucleus. The protein resides in the mitochondrion. In terms of biological role, adapter protein that plays a role in different signaling pathways including TLRs and IL-1 pathways or innate antiviral induction signaling. Plays a role in the activation of NF-kappa-B by forming a signal complex with TRAF6 and TAK1/MAP3K7 to activate TAK1/MAP3K7 leading to activation of IKKs. Once ubiquitinated, interacts with the dissociated RELA and NFKB1 proteins and translocates to the nucleus where it induces NF-kappa-B-dependent gene expression. Plays a role in innate antiviral immune response by bridging the pattern recognition receptors RIGI and MDA5/IFIT1 to the MAVS complex at the mitochondrion. Promotes proteolytic activation of MAP3K1. Involved in the BMP signaling pathway. Required for normal embryonic development. Functionally, as part of the MCIA complex, involved in the assembly of the mitochondrial complex I. This Mus musculus (Mouse) protein is Evolutionarily conserved signaling intermediate in Toll pathway, mitochondrial.